The sequence spans 131 residues: Small ribosomal subunit protein uS11 (131 aa).

It belongs to the universal ribosomal protein uS11 family. In terms of assembly, part of the 30S ribosomal subunit. Interacts with proteins S7 and S18. Binds to IF-3.

Functionally, located on the platform of the 30S subunit, it bridges several disparate RNA helices of the 16S rRNA. Forms part of the Shine-Dalgarno cleft in the 70S ribosome. The polypeptide is Small ribosomal subunit protein uS11 (Endomicrobium trichonymphae).